The chain runs to 304 residues: MWFKNLQLHRLPAPWKVSVEQMEKWLAPHAFQPANSVETTRQGWTSPRNNGSLVYSINQQMLITYRAEKKLLPASVVTQVTKARALELEEQQGFKPGRKQMRDLKEQVTDELLPRAFSIQRDTRVWIDTVNGWLVIDAASQALGDDVLGLLVKSVDRLPISSVRVAQAPVAAMTNWLLAGEGPVNFTLDQDTELRSPAEGNATVRYVGHALEADDMRRHIEAGKQCMRLAMTWNDRVSFVMTPSLTIKRVTALDVIKEASDPTAQNDDEQFDSDFTLMTGELAKLFDGVVDALGGELDEGSKAA.

The protein belongs to the RdgC family.

It localises to the cytoplasm. The protein resides in the nucleoid. Its function is as follows. May be involved in recombination. This chain is Recombination-associated protein RdgC, found in Paraburkholderia phymatum (strain DSM 17167 / CIP 108236 / LMG 21445 / STM815) (Burkholderia phymatum).